Consider the following 366-residue polypeptide: Probable cinnamyl alcohol dehydrogenase 3 (366 aa).

Cys-53 is a binding site for Zn(2+). An NADP(+)-binding site is contributed by Ser-55. The Zn(2+) site is built by His-75, Glu-76, Cys-106, Cys-109, Cys-112, Cys-120, and Cys-169. NADP(+) contacts are provided by residues Thr-173, 194–199 (GLGGLG), 217–222 (SSSPGK), Thr-257, Gly-281, and 304–306 (SNI).

It belongs to the zinc-containing alcohol dehydrogenase family. Homodimer. Zn(2+) is required as a cofactor.

The enzyme catalyses (E)-cinnamyl alcohol + NADP(+) = (E)-cinnamaldehyde + NADPH + H(+). It catalyses the reaction (E)-coniferol + NADP(+) = (E)-coniferaldehyde + NADPH + H(+). The catalysed reaction is (E)-sinapyl alcohol + NADP(+) = (E)-sinapaldehyde + NADPH + H(+). It carries out the reaction (E)-4-coumaroyl alcohol + NADP(+) = (E)-4-coumaraldehyde + NADPH + H(+). The enzyme catalyses (E)-caffeyl alcohol + NADP(+) = (E)-caffeyl aldehyde + NADPH + H(+). Its pathway is aromatic compound metabolism; phenylpropanoid biosynthesis. Functionally, involved in lignin biosynthesis. Catalyzes the final step specific for the production of lignin monomers. Catalyzes the NADPH-dependent reduction of coniferaldehyde, 5-hydroxyconiferaldehyde, sinapaldehyde, 4-coumaraldehyde and caffeyl aldehyde to their respective alcohols. This chain is Probable cinnamyl alcohol dehydrogenase 3, found in Oryza sativa subsp. japonica (Rice).